The following is a 728-amino-acid chain: 1,4-alpha-glucan branching enzyme GlgB (728 aa).

Asp405 serves as the catalytic Nucleophile. Glu458 functions as the Proton donor in the catalytic mechanism.

Belongs to the glycosyl hydrolase 13 family. GlgB subfamily. In terms of assembly, monomer.

The enzyme catalyses Transfers a segment of a (1-&gt;4)-alpha-D-glucan chain to a primary hydroxy group in a similar glucan chain.. Its pathway is glycan biosynthesis; glycogen biosynthesis. Its function is as follows. Catalyzes the formation of the alpha-1,6-glucosidic linkages in glycogen by scission of a 1,4-alpha-linked oligosaccharide from growing alpha-1,4-glucan chains and the subsequent attachment of the oligosaccharide to the alpha-1,6 position. The polypeptide is 1,4-alpha-glucan branching enzyme GlgB (Salmonella paratyphi B (strain ATCC BAA-1250 / SPB7)).